A 401-amino-acid chain; its full sequence is Alpha-(1,4)-fucosyltransferase (401 aa).

Residues 1 to 4 (MPMR) lie on the Cytoplasmic side of the membrane. A helical; Signal-anchor for type II membrane protein membrane pass occupies residues 5-27 (YLNAMAALLMMFFTLLILSFTGI). The Lumenal portion of the chain corresponds to 28–401 (LEFPSASTSM…SRRGGKNAGV (374 aa)). N85 is a glycosylation site (N-linked (GlcNAc...) asparagine).

This sequence belongs to the glycosyltransferase 10 family. As to expression, present in root, stem, flower buds and green siliques.

Its subcellular location is the golgi apparatus. The protein resides in the golgi stack membrane. Its pathway is protein modification; protein glycosylation. May be involved in cell wall synthesis. Catalyzes alpha-1,4 glycosidic linkages and generates Lewis-a epitopes. In Arabidopsis thaliana (Mouse-ear cress), this protein is Alpha-(1,4)-fucosyltransferase (FUT13).